Consider the following 394-residue polypeptide: Phosphoglycerate kinase (394 aa).

Residues 21–23, arginine 36, 59–62, arginine 118, and arginine 151 each bind substrate; these read DFN and HLGR. Serine 183 is modified (phosphoserine). ATP is bound at residue lysine 201. Position 299 is a phosphothreonine (threonine 299). Residues asparagine 316, glutamate 323, and 350–353 each bind ATP; that span reads GGDS.

It belongs to the phosphoglycerate kinase family. As to quaternary structure, monomer.

Its subcellular location is the cytoplasm. The catalysed reaction is (2R)-3-phosphoglycerate + ATP = (2R)-3-phospho-glyceroyl phosphate + ADP. Its pathway is carbohydrate degradation; glycolysis; pyruvate from D-glyceraldehyde 3-phosphate: step 2/5. The chain is Phosphoglycerate kinase from Geobacillus stearothermophilus (Bacillus stearothermophilus).